The primary structure comprises 896 residues: Bifunctional glutamine synthetase adenylyltransferase/adenylyl-removing enzyme (896 aa).

The interval 1-411 (MSDNRLDTAR…LFNEILSEPE (411 aa)) is adenylyl removase. An adenylyl transferase region spans residues 417–896 (NSEWQWAWQE…EVFGEEAATA (480 aa)).

The protein belongs to the GlnE family. The cofactor is Mg(2+).

The enzyme catalyses [glutamine synthetase]-O(4)-(5'-adenylyl)-L-tyrosine + phosphate = [glutamine synthetase]-L-tyrosine + ADP. The catalysed reaction is [glutamine synthetase]-L-tyrosine + ATP = [glutamine synthetase]-O(4)-(5'-adenylyl)-L-tyrosine + diphosphate. Functionally, involved in the regulation of glutamine synthetase GlnA, a key enzyme in the process to assimilate ammonia. When cellular nitrogen levels are high, the C-terminal adenylyl transferase (AT) inactivates GlnA by covalent transfer of an adenylyl group from ATP to specific tyrosine residue of GlnA, thus reducing its activity. Conversely, when nitrogen levels are low, the N-terminal adenylyl removase (AR) activates GlnA by removing the adenylyl group by phosphorolysis, increasing its activity. The regulatory region of GlnE binds the signal transduction protein PII (GlnB) which indicates the nitrogen status of the cell. In Neisseria meningitidis serogroup A / serotype 4A (strain DSM 15465 / Z2491), this protein is Bifunctional glutamine synthetase adenylyltransferase/adenylyl-removing enzyme.